Here is a 558-residue protein sequence, read N- to C-terminus: Formate--tetrahydrofolate ligase (558 aa).

67–74 (TPAGEGKT) serves as a coordination point for ATP.

It belongs to the formate--tetrahydrofolate ligase family.

It carries out the reaction (6S)-5,6,7,8-tetrahydrofolate + formate + ATP = (6R)-10-formyltetrahydrofolate + ADP + phosphate. It functions in the pathway one-carbon metabolism; tetrahydrofolate interconversion. The polypeptide is Formate--tetrahydrofolate ligase (Ruegeria pomeroyi (strain ATCC 700808 / DSM 15171 / DSS-3) (Silicibacter pomeroyi)).